Here is a 188-residue protein sequence, read N- to C-terminus: Putative manganese efflux pump MntP (188 aa).

Transmembrane regions (helical) follow at residues 3–23 (LYALLLIALGMSMDAFAVALA), 35–55 (IAATALVFGTVEALTPLAGWV), 70–90 (WAAFVLLGGLGLKMMHEGLSG), 104–126 (WLTVLTAFGTSIDSMIVGVGLAF), 140–160 (MATTVLVAVGLTVGRALGVLF), and 167–187 (AGGLVLIAIGTWTLLSHLGLI).

This sequence belongs to the MntP (TC 9.B.29) family.

The protein localises to the cell inner membrane. In terms of biological role, probably functions as a manganese efflux pump. This is Putative manganese efflux pump MntP from Neisseria meningitidis serogroup C / serotype 2a (strain ATCC 700532 / DSM 15464 / FAM18).